We begin with the raw amino-acid sequence, 275 residues long: Large ribosomal subunit protein uL2c (275 aa).

The interval Thr-219–Ser-267 is disordered. Positions Leu-255 to Lys-264 are enriched in basic residues.

It belongs to the universal ribosomal protein uL2 family. Part of the 50S ribosomal subunit.

The protein resides in the plastid. Its subcellular location is the chloroplast. The chain is Large ribosomal subunit protein uL2c (rpl2) from Thalassiosira pseudonana (Marine diatom).